The chain runs to 510 residues: ATP synthase subunit alpha (510 aa).

170–177 (GDRQTGKT) is an ATP binding site.

It belongs to the ATPase alpha/beta chains family. As to quaternary structure, F-type ATPases have 2 components, CF(1) - the catalytic core - and CF(0) - the membrane proton channel. CF(1) has five subunits: alpha(3), beta(3), gamma(1), delta(1), epsilon(1). CF(0) has three main subunits: a(1), b(2) and c(9-12). The alpha and beta chains form an alternating ring which encloses part of the gamma chain. CF(1) is attached to CF(0) by a central stalk formed by the gamma and epsilon chains, while a peripheral stalk is formed by the delta and b chains.

It is found in the cell inner membrane. It catalyses the reaction ATP + H2O + 4 H(+)(in) = ADP + phosphate + 5 H(+)(out). Produces ATP from ADP in the presence of a proton gradient across the membrane. The alpha chain is a regulatory subunit. The protein is ATP synthase subunit alpha of Caulobacter sp. (strain K31).